Reading from the N-terminus, the 196-residue chain is ATP-dependent Clp protease proteolytic subunit (196 aa).

Catalysis depends on S101, which acts as the Nucleophile. The active site involves H126.

It belongs to the peptidase S14 family. As to quaternary structure, component of the chloroplastic Clp protease core complex.

It localises to the plastid. The protein resides in the chloroplast stroma. It carries out the reaction Hydrolysis of proteins to small peptides in the presence of ATP and magnesium. alpha-casein is the usual test substrate. In the absence of ATP, only oligopeptides shorter than five residues are hydrolyzed (such as succinyl-Leu-Tyr-|-NHMec, and Leu-Tyr-Leu-|-Tyr-Trp, in which cleavage of the -Tyr-|-Leu- and -Tyr-|-Trp bonds also occurs).. Its function is as follows. Cleaves peptides in various proteins in a process that requires ATP hydrolysis. Has a chymotrypsin-like activity. Plays a major role in the degradation of misfolded proteins. The protein is ATP-dependent Clp protease proteolytic subunit of Barbarea verna (Land cress).